We begin with the raw amino-acid sequence, 570 residues long: Methionine--tRNA ligase (570 aa).

Positions 11-21 (PYVQTVPHLGN) match the 'HIGH' region motif. The Zn(2+) site is built by cysteine 143, cysteine 146, cysteine 156, and cysteine 159. The 'KMSKS' region signature appears at 333 to 337 (KFSKS). Lysine 336 provides a ligand contact to ATP.

This sequence belongs to the class-I aminoacyl-tRNA synthetase family. MetG type 1 subfamily. Zn(2+) serves as cofactor.

It is found in the cytoplasm. The catalysed reaction is tRNA(Met) + L-methionine + ATP = L-methionyl-tRNA(Met) + AMP + diphosphate. Functionally, is required not only for elongation of protein synthesis but also for the initiation of all mRNA translation through initiator tRNA(fMet) aminoacylation. The chain is Methionine--tRNA ligase from Pyrobaculum arsenaticum (strain DSM 13514 / JCM 11321 / PZ6).